The following is a 218-amino-acid chain: Histidine biosynthesis bifunctional protein HisIE (218 aa).

The phosphoribosyl-AMP cyclohydrolase stretch occupies residues Met1–Thr131. The interval Leu132–Arg218 is phosphoribosyl-ATP pyrophosphohydrolase.

In the N-terminal section; belongs to the PRA-CH family. This sequence in the C-terminal section; belongs to the PRA-PH family.

It localises to the cytoplasm. It carries out the reaction 1-(5-phospho-beta-D-ribosyl)-ATP + H2O = 1-(5-phospho-beta-D-ribosyl)-5'-AMP + diphosphate + H(+). The enzyme catalyses 1-(5-phospho-beta-D-ribosyl)-5'-AMP + H2O = 1-(5-phospho-beta-D-ribosyl)-5-[(5-phospho-beta-D-ribosylamino)methylideneamino]imidazole-4-carboxamide. Its pathway is amino-acid biosynthesis; L-histidine biosynthesis; L-histidine from 5-phospho-alpha-D-ribose 1-diphosphate: step 2/9. It participates in amino-acid biosynthesis; L-histidine biosynthesis; L-histidine from 5-phospho-alpha-D-ribose 1-diphosphate: step 3/9. The polypeptide is Histidine biosynthesis bifunctional protein HisIE (Gloeobacter violaceus (strain ATCC 29082 / PCC 7421)).